Reading from the N-terminus, the 307-residue chain is Fructokinase (307 aa).

This sequence belongs to the carbohydrate kinase PfkB family.

The enzyme catalyses D-fructose + ATP = D-fructose 6-phosphate + ADP + H(+). The polypeptide is Fructokinase (scrK) (Salmonella typhimurium).